The sequence spans 301 residues: G-protein coupled receptor homolog U51 (301 aa).

The Extracellular segment spans residues 1–15 (MEKETKSLAWPATAE). The helical transmembrane segment at 16–36 (FYGWVFIFSSIQLCTMVLLTV) threads the bilayer. At 37–48 (RFNSFKVGREYA) the chain is on the cytoplasmic side. Residues 49–69 (VFTFAGMSFNCFLLPIKMGLL) form a helical membrane-spanning segment. Residues 70-82 (SGHWSLPRDFCAI) are Extracellular-facing. Residues 83–103 (LLYIDDFSIYFSSWSLVFMAI) form a helical membrane-spanning segment. Residues 104-122 (ERINHFCYSTPLLNENSKA) are Cytoplasmic-facing. Residues 123–143 (LAKVCFPIVWIISGVQALQML) form a helical membrane-spanning segment. At 144 to 168 (NNYKATALQNETPQCFLAFLRSGYD) the chain is on the extracellular side. Residues 169–189 (MWLMLVYSVMIPVMLVFIYIY) form a helical membrane-spanning segment. The Cytoplasmic portion of the chain corresponds to 190–199 (SKNFMLLKDE). The helical transmembrane segment at 200 to 220 (LSTVTTYLCIYLLLGTIAHLP) threads the bilayer. At 221-238 (KAGLSEIESDKIFYGLRD) the chain is on the extracellular side. Residues 239–259 (IFMALPVLKVYYIPVMAYCMA) traverse the membrane as a helical segment. The Cytoplasmic segment spans residues 260–301 (CDDHTVPVRLCSIWLVNLCKKCFSCTRREKESDLEVGIKMLK).

This sequence belongs to the G-protein coupled receptor 1 family.

It localises to the host cell membrane. This chain is G-protein coupled receptor homolog U51 (U51), found in Homo sapiens (Human).